Here is a 313-residue protein sequence, read N- to C-terminus: Ribosomal RNA small subunit methyltransferase H (313 aa).

S-adenosyl-L-methionine-binding positions include 35 to 37 (GGH), Asp55, Phe79, Asp101, and Gln108.

The protein belongs to the methyltransferase superfamily. RsmH family.

It localises to the cytoplasm. It catalyses the reaction cytidine(1402) in 16S rRNA + S-adenosyl-L-methionine = N(4)-methylcytidine(1402) in 16S rRNA + S-adenosyl-L-homocysteine + H(+). Specifically methylates the N4 position of cytidine in position 1402 (C1402) of 16S rRNA. The sequence is that of Ribosomal RNA small subunit methyltransferase H from Salmonella arizonae (strain ATCC BAA-731 / CDC346-86 / RSK2980).